Here is a 456-residue protein sequence, read N- to C-terminus: Aromatic amino acid transport protein AroP (456 aa).

The Cytoplasmic portion of the chain corresponds to 1-18 (MEGQQHGEQLKRGLKNRH). A helical membrane pass occupies residues 19–39 (IQLIALGGAIGTGLFLGSASV). The Periplasmic portion of the chain corresponds to 40–41 (IQ). The helical transmembrane segment at 42-62 (SAGPGIILGYAIAGFIAFLIM) threads the bilayer. Residues 63 to 85 (RQLGEMVVEEPVAGSFSHFAYKY) are Cytoplasmic-facing. The chain crosses the membrane as a helical span at residues 86–106 (WGSFAGFASGWNYWVLYVLVA). At 107–116 (MAELTAVGKY) the chain is on the periplasmic side. Residues 117-137 (IQFWYPEIPTWVSAAVFFVVI) traverse the membrane as a helical segment. Residues 138–154 (NAINLTNVKVFGEMEFW) lie on the Cytoplasmic side of the membrane. Residues 155–175 (FAIIKVIAVVAMIIFGAWLLF) form a helical membrane-spanning segment. Residues 176–200 (SGNGGPQASVSNLWDQGGFLPHGFT) are Periplasmic-facing. The chain crosses the membrane as a helical span at residues 201–221 (GLVMMMAIIMFSFGGLELVGI). Topologically, residues 222-239 (TAAEADNPEQSIPKATNQ) are cytoplasmic. Residues 240–260 (VIYRILIFYIGSLAVLLSLMP) form a helical membrane-spanning segment. Topologically, residues 261–270 (WTRVTADTSP) are periplasmic. A helical transmembrane segment spans residues 271 to 291 (FVLIFHELGDTFVANALNIVV). Residues 292-332 (LTAALSVYNSCVYCNSRMLFGLAQQGNAPKALASVDKRGVP) lie on the Cytoplasmic side of the membrane. Residues 333–353 (VNTILVSALVTALCVLINYLA) form a helical membrane-spanning segment. The Periplasmic portion of the chain corresponds to 354–357 (PESA). The chain crosses the membrane as a helical span at residues 358 to 378 (FGLLMALVVSALVINWAMISL). Residues 379 to 398 (AHMKFRRAKQEQGVVTRFPA) lie on the Cytoplasmic side of the membrane. The chain crosses the membrane as a helical span at residues 399-419 (LLYPLGNWICLLFMAAVLVIM). Topologically, residues 420-424 (LMTPG) are periplasmic. A helical transmembrane segment spans residues 425 to 445 (MAISVYLIPVWLIVLGIGYLF). The Cytoplasmic portion of the chain corresponds to 446-456 (KEKTAKAVKAH).

The protein belongs to the amino acid-polyamine-organocation (APC) superfamily. Amino acid transporter (AAT) (TC 2.A.3.1) family.

It is found in the cell inner membrane. It catalyses the reaction L-phenylalanine(in) + H(+)(in) = L-phenylalanine(out) + H(+)(out). The catalysed reaction is L-tryptophan(in) + H(+)(in) = L-tryptophan(out) + H(+)(out). It carries out the reaction L-tyrosine(in) + H(+)(in) = L-tyrosine(out) + H(+)(out). Functionally, permease that is involved in the active transport across the cytoplasmic membrane of all three aromatic amino acids, phenylalanine, tyrosine and tryptophan. The sequence is that of Aromatic amino acid transport protein AroP (aroP) from Escherichia coli O6:H1 (strain CFT073 / ATCC 700928 / UPEC).